The following is an 82-amino-acid chain: U-actitoxin-Avd3f (82 aa).

The signal sequence occupies residues 1-16 (MVFLLCFFLVADVSYG). Residues 21 to 71 (CLLPMDVGRCRASHPRYYYNSSSKRCEKFIYGGCRGNANNFHTLEECEKVC) enclose the BPTI/Kunitz inhibitor domain. Disulfide bonds link Cys-21/Cys-71, Cys-30/Cys-54, and Cys-46/Cys-67. The propeptide occupies 75–82 (SRDSPKEN).

It belongs to the venom Kunitz-type family. Sea anemone type 2 potassium channel toxin subfamily.

It localises to the secreted. Its subcellular location is the nematocyst. Dual-function toxin that inhibits both the serine protease trypsin (Kd=30 nM) and voltage-gated potassium channels Kv1.2/KCNA2 (IC(50)=2800 nM). This Anemonia viridis (Snakelocks anemone) protein is U-actitoxin-Avd3f.